Here is a 56-residue protein sequence, read N- to C-terminus: Ribosome biogenesis protein Nop10 (56 aa).

The protein belongs to the NOP10 family.

Functionally, involved in ribosome biogenesis; more specifically in 18S rRNA pseudouridylation and in cleavage of pre-rRNA. The protein is Ribosome biogenesis protein Nop10 of Methanococcoides burtonii (strain DSM 6242 / NBRC 107633 / OCM 468 / ACE-M).